A 445-amino-acid polypeptide reads, in one-letter code: Ribosomal protein uS12 methylthiotransferase RimO (445 aa).

An MTTase N-terminal domain is found at Pro13 to Pro123. Positions 22, 58, 87, 154, 158, and 161 each coordinate [4Fe-4S] cluster. Residues Leu140–Gln377 enclose the Radical SAM core domain. The 66-residue stretch at Ala380 to Ile445 folds into the TRAM domain.

It belongs to the methylthiotransferase family. RimO subfamily. The cofactor is [4Fe-4S] cluster.

The protein resides in the cytoplasm. It carries out the reaction L-aspartate(89)-[ribosomal protein uS12]-hydrogen + (sulfur carrier)-SH + AH2 + 2 S-adenosyl-L-methionine = 3-methylsulfanyl-L-aspartate(89)-[ribosomal protein uS12]-hydrogen + (sulfur carrier)-H + 5'-deoxyadenosine + L-methionine + A + S-adenosyl-L-homocysteine + 2 H(+). In terms of biological role, catalyzes the methylthiolation of an aspartic acid residue of ribosomal protein uS12. In Nitrosomonas eutropha (strain DSM 101675 / C91 / Nm57), this protein is Ribosomal protein uS12 methylthiotransferase RimO.